The following is a 466-amino-acid chain: Chromosomal replication initiator protein DnaA (466 aa).

Residues methionine 1–glutamine 77 form a domain I, interacts with DnaA modulators region. A domain II region spans residues glutamine 77–lysine 121. Residues leucine 87–threonine 122 are disordered. Low complexity predominate over residues glutamate 97 to alanine 108. Residues threonine 122–alanine 338 form a domain III, AAA+ region region. Glycine 166, glycine 168, lysine 169, and threonine 170 together coordinate ATP. The interval serine 339–alanine 466 is domain IV, binds dsDNA.

It belongs to the DnaA family. As to quaternary structure, oligomerizes as a right-handed, spiral filament on DNA at oriC.

The protein resides in the cytoplasm. Plays an essential role in the initiation and regulation of chromosomal replication. ATP-DnaA binds to the origin of replication (oriC) to initiate formation of the DNA replication initiation complex once per cell cycle. Binds the DnaA box (a 9 base pair repeat at the origin) and separates the double-stranded (ds)DNA. Forms a right-handed helical filament on oriC DNA; dsDNA binds to the exterior of the filament while single-stranded (ss)DNA is stabiized in the filament's interior. The ATP-DnaA-oriC complex binds and stabilizes one strand of the AT-rich DNA unwinding element (DUE), permitting loading of DNA polymerase. After initiation quickly degrades to an ADP-DnaA complex that is not apt for DNA replication. Binds acidic phospholipids. In terms of biological role, strand separation requires the DnaA boxes and adjacent DnaA-trio motifs but works equally well with ADP or ATP. This chain is Chromosomal replication initiator protein DnaA, found in Deinococcus radiodurans (strain ATCC 13939 / DSM 20539 / JCM 16871 / CCUG 27074 / LMG 4051 / NBRC 15346 / NCIMB 9279 / VKM B-1422 / R1).